Here is a 264-residue protein sequence, read N- to C-terminus: S-adenosylmethionine decarboxylase proenzyme (264 aa).

Ser-113 (schiff-base intermediate with substrate; via pyruvic acid) is an active-site residue. At Ser-113 the chain carries Pyruvic acid (Ser); by autocatalysis. The active-site Proton acceptor; for processing activity is His-118. Catalysis depends on Cys-141, which acts as the Proton donor; for catalytic activity.

This sequence belongs to the prokaryotic AdoMetDC family. Type 2 subfamily. Heterooctamer of four alpha and four beta chains arranged as a tetramer of alpha/beta heterodimers. The cofactor is pyruvate. Is synthesized initially as an inactive proenzyme. Formation of the active enzyme involves a self-maturation process in which the active site pyruvoyl group is generated from an internal serine residue via an autocatalytic post-translational modification. Two non-identical subunits are generated from the proenzyme in this reaction, and the pyruvate is formed at the N-terminus of the alpha chain, which is derived from the carboxyl end of the proenzyme. The post-translation cleavage follows an unusual pathway, termed non-hydrolytic serinolysis, in which the side chain hydroxyl group of the serine supplies its oxygen atom to form the C-terminus of the beta chain, while the remainder of the serine residue undergoes an oxidative deamination to produce ammonia and the pyruvoyl group blocking the N-terminus of the alpha chain.

The enzyme catalyses S-adenosyl-L-methionine + H(+) = S-adenosyl 3-(methylsulfanyl)propylamine + CO2. The protein operates within amine and polyamine biosynthesis; S-adenosylmethioninamine biosynthesis; S-adenosylmethioninamine from S-adenosyl-L-methionine: step 1/1. Its function is as follows. Catalyzes the decarboxylation of S-adenosylmethionine to S-adenosylmethioninamine (dcAdoMet), the propylamine donor required for the synthesis of the polyamines spermine and spermidine from the diamine putrescine. This chain is S-adenosylmethionine decarboxylase proenzyme, found in Xylella fastidiosa (strain Temecula1 / ATCC 700964).